Reading from the N-terminus, the 766-residue chain is Tripartite terminase subunit 1 (766 aa).

A C3H1-type zinc finger spans residues 191-219; it reads CSVCFEELCVTANQGEAVHRRLLECTCDH. 683–690 is an ATP binding site; sequence FSSVFHCG.

The protein belongs to the herpesviridae TRM1 protein family. In terms of assembly, associates with TRM2 and TRM3 to form the tripartite terminase complex. Interacts with portal protein.

The protein localises to the host nucleus. Functionally, component of the molecular motor that translocates viral genomic DNA in empty capsid during DNA packaging. Forms a tripartite terminase complex together with TRM2 and TRM3 in the host cytoplasm. Once the complex reaches the host nucleus, it interacts with the capsid portal vertex. This portal forms a ring in which genomic DNA is translocated into the capsid. TRM1 carries an endonuclease activity that plays an important role for the cleavage of concatemeric viral DNA into unit length genomes. The protein is Tripartite terminase subunit 1 of Equus caballus (Horse).